We begin with the raw amino-acid sequence, 170 residues long: uncharacterized protein (170 aa).

This is an uncharacterized protein from Acidianus convivator (ATV).